The sequence spans 398 residues: 1-deoxy-D-xylulose 5-phosphate reductoisomerase (398 aa).

Positions 11, 12, 13, 14, 38, 39, and 125 each coordinate NADPH. K126 contacts 1-deoxy-D-xylulose 5-phosphate. An NADPH-binding site is contributed by E127. A Mn(2+)-binding site is contributed by D151. 4 residues coordinate 1-deoxy-D-xylulose 5-phosphate: S152, E153, S179, and H202. Residue E153 participates in Mn(2+) binding. G208 is an NADPH binding site. Residues S215, N220, K221, and E224 each coordinate 1-deoxy-D-xylulose 5-phosphate. A Mn(2+)-binding site is contributed by E224.

The protein belongs to the DXR family. Requires Mg(2+) as cofactor. Mn(2+) serves as cofactor.

It catalyses the reaction 2-C-methyl-D-erythritol 4-phosphate + NADP(+) = 1-deoxy-D-xylulose 5-phosphate + NADPH + H(+). It functions in the pathway isoprenoid biosynthesis; isopentenyl diphosphate biosynthesis via DXP pathway; isopentenyl diphosphate from 1-deoxy-D-xylulose 5-phosphate: step 1/6. Its function is as follows. Catalyzes the NADPH-dependent rearrangement and reduction of 1-deoxy-D-xylulose-5-phosphate (DXP) to 2-C-methyl-D-erythritol 4-phosphate (MEP). The chain is 1-deoxy-D-xylulose 5-phosphate reductoisomerase from Burkholderia cenocepacia (strain HI2424).